The following is a 178-amino-acid chain: Deoxycytidylate deaminase (178 aa).

The CMP/dCMP-type deaminase domain maps to 14–145 (EWPEYFMAVA…DEATAARLLF (132 aa)). His84 lines the Zn(2+) pocket. Glu86 acts as the Proton donor in catalysis. Positions 110 and 113 each coordinate Zn(2+). The residue at position 174 (Ser174) is a Phosphoserine.

Belongs to the cytidine and deoxycytidylate deaminase family. Homohexamer. Requires Zn(2+) as cofactor.

It catalyses the reaction dCMP + H2O + H(+) = dUMP + NH4(+). It carries out the reaction 5-hydroxymethyl-dCMP + H2O + H(+) = 5-hydroxymethyl-dUMP + NH4(+). Allosteric enzyme whose activity is greatly influenced by the end products of its metabolic pathway, dCTP and dTTP. Its function is as follows. Catalyzes the deamination of dCMP to dUMP, providing the nucleoside monophosphate substrate for the thymidylate synthase/TYMS. Also, part of a nucleotide salvage pathway that eliminates epigenetically modified 5-hydroxymethyl-dCMP (hmdCMP) in a two-step process entailing deamination to cytotoxic 5-hydroxymethyl-dUMP (hmdUMP), followed by its hydrolysis into 5-hydroxymethyluracil (hmU) and 2-deoxy-D-ribose 5-phosphate (deoxyribosephosphate). Catalyzes the first step in that pathway, the deamination of 5-hydroxymethyl-dCMP (hmdCMP). The sequence is that of Deoxycytidylate deaminase from Homo sapiens (Human).